Reading from the N-terminus, the 281-residue chain is Cardosin-F (281 aa).

A Peptidase A1 domain is found at Tyr18 to Ala278. Asp36 is an active-site residue. Cys181 and Cys185 form a disulfide bridge. The active site involves Asp190. N-linked (GlcNAc...) asparagine glycosylation occurs at Asn213.

The protein belongs to the peptidase A1 family. In terms of assembly, heterodimer of a light chain and a heavy chain. An intermediate form is produced first, and undergoes proteolytic processing to remove the internal plant-specific insert (PSI) and the propeptide. In terms of processing, N-glycosylated. Pistils.

It is found in the microsome membrane. The protein localises to the protein storage vacuole. The protein resides in the secreted. Its subcellular location is the cell wall. It localises to the extracellular space. It is found in the extracellular matrix. Its activity is regulated as follows. Inhibited by pepstatin. Its function is as follows. Aspartic protease with a high preference for bonds between hydrophobic residues. This is Cardosin-F from Cynara cardunculus (Cardoon).